Here is a 78-residue protein sequence, read N- to C-terminus: MSDIAERVKKIVIDHLGVDAEKVSEGASFIDDLGADSLDTVELVMAFEEEFGVEIPDDAADSILTVGDAVKFIEKAQA.

Positions 2–77 (SDIAERVKKI…DAVKFIEKAQ (76 aa)) constitute a Carrier domain. Ser-37 is modified (O-(pantetheine 4'-phosphoryl)serine).

It belongs to the acyl carrier protein (ACP) family. In terms of processing, 4'-phosphopantetheine is transferred from CoA to a specific serine of apo-ACP by AcpS. This modification is essential for activity because fatty acids are bound in thioester linkage to the sulfhydryl of the prosthetic group.

It localises to the cytoplasm. It functions in the pathway lipid metabolism; fatty acid biosynthesis. Its function is as follows. Carrier of the growing fatty acid chain in fatty acid biosynthesis. In Sinorhizobium fredii (strain NBRC 101917 / NGR234), this protein is Acyl carrier protein.